Reading from the N-terminus, the 227-residue chain is Thymidylate synthase (227 aa).

Position 89-90 (89-90 (RR)) interacts with dUMP. C109 acts as the Nucleophile in catalysis. DUMP contacts are provided by residues 129 to 132 (RSND), N140, and 170 to 172 (HVY). D132 serves as a coordination point for (6R)-5,10-methylene-5,6,7,8-tetrahydrofolate.

The protein belongs to the thymidylate synthase family. Bacterial-type ThyA subfamily. As to quaternary structure, homodimer.

Its subcellular location is the cytoplasm. It catalyses the reaction dUMP + (6R)-5,10-methylene-5,6,7,8-tetrahydrofolate = 7,8-dihydrofolate + dTMP. Its pathway is pyrimidine metabolism; dTTP biosynthesis. Functionally, catalyzes the reductive methylation of 2'-deoxyuridine-5'-monophosphate (dUMP) to 2'-deoxythymidine-5'-monophosphate (dTMP) while utilizing 5,10-methylenetetrahydrofolate (mTHF) as the methyl donor and reductant in the reaction, yielding dihydrofolate (DHF) as a by-product. This enzymatic reaction provides an intracellular de novo source of dTMP, an essential precursor for DNA biosynthesis. The sequence is that of Thymidylate synthase from Bacillus atrophaeus.